We begin with the raw amino-acid sequence, 84 residues long: U4-theraphotoxin-Hhn1n (84 aa).

Positions 1-22 (MKVTLIAILTCAAVLVLHTTAA) are cleaved as a signal peptide. The propeptide occupies 23 to 47 (EELEESQLMEVGMPDTELAAVDEER). 3 cysteine pairs are disulfide-bonded: Cys-51–Cys-65, Cys-55–Cys-76, and Cys-70–Cys-81.

It belongs to the neurotoxin 12 (Hwtx-2) family. 02 (Hwtx-2) subfamily. As to expression, expressed by the venom gland.

It localises to the secreted. Its function is as follows. Postsynaptic neurotoxin. The polypeptide is U4-theraphotoxin-Hhn1n (Cyriopagopus hainanus (Chinese bird spider)).